The primary structure comprises 3955 residues: Nonribosomal peptide synthetase fmqA (3955 aa).

The tract at residues 293–691 is adenylation 1; it reads SYSELETLSL…AQACCTIRNV (399 aa). A Carrier 1 domain is found at 806–879; it reads THKETLIHQL…DLARLTDVVN (74 aa). Ser840 is subject to O-(pantetheine 4'-phosphoryl)serine. Residues 916 to 1187 are condensation 1; that stretch reads QDIYPCTPLQ…IATVPLRVRL (272 aa). The adenylation 2 stretch occupies residues 1371–1766; that stretch reads TYAELGELSD…DEVEKHVYQC (396 aa). Positions 1880–1956 constitute a Carrier 2 domain; it reads EPTSVAEREM…KIMSHESSLS (77 aa). The residue at position 1917 (Ser1917) is an O-(pantetheine 4'-phosphoryl)serine. An epimerase region spans residues 1970 to 2261; the sequence is FALSPIQQMF…FTTMWPVVAE (292 aa). The tract at residues 2438–2724 is condensation 2; it reads EDIYPCSPSQ…FNPLPCRVHL (287 aa). Positions 2906–3299 are adenylation 3; that stretch reads TYGQLDELSS…GEVEANVQHC (394 aa). The Carrier 3 domain occupies 3422-3498; the sequence is APSTEEEKKL…DLAKVAVPKS (77 aa). Residue Ser3459 is modified to O-(pantetheine 4'-phosphoryl)serine. Residues 3541–3805 are condensation 3; that stretch reads PGTQAQQFFI…CLNFIPLRVM (265 aa).

It belongs to the NRP synthetase family. Interacts with the mitogen-activated protein kinase mpkA.

It is found in the cytoplasmic vesicle. It functions in the pathway alkaloid biosynthesis. In terms of biological role, nonribosomal peptide synthetase; part of the gene cluster that mediates the biosynthesis of the antitumor fumiquinazolines that confer a dual-usage capability to defend against phagocytes in the environment and animal hosts. The simplest member is fumiquinazoline F (FQF) with a 6-6-6 tricyclic core derived from anthranilic acid (Ant), tryptophan (Trp), and alanine (Ala). The trimodular NRPS fmqA is responsible for FQF formation. Modules 1, 2 and 3 of fmqA are predicted to activate and load Ant, Trp and Ala, respectively, providing for the assembly of an Ant-Trp-Ala-S-enzyme intermediate that would undergo double cyclization for chain release and generation of the tricyclic 6-6-6 product fumiquinazoline F. The presence of an E domain predicted for module 2 of fmqA is consistent with epimerization of L-Trp to D-Trp during assembly to generate the R-stereocenter at C14 of FQF. The FAD-dependent monooxygenase fmqB and the monomodular NRPS fmqC then maturate FQF to FQA. FmqB oxidizes the 2',3'-double bond of the indole side chain of FQF, and fmqC activates L-Ala as the adenylate, installs it as the pantetheinyl thioester on its carrier protein domain, and acylates the oxidized indole for subsequent intramolecular cyclization to create the 6-5-5-imidazolindolone of FQA. The FAD-linked oxidoreductase fmqD introduces a third layer of scaffold complexity by converting FQA to the spirohemiaminal FQC, presumably by catalyzing the formation of a transient imine within the pyrazinone ring. FQC subsequently converts nonenzymatically to the known cyclic aminal FQD. The protein is Nonribosomal peptide synthetase fmqA of Aspergillus fumigatus (strain ATCC MYA-4609 / CBS 101355 / FGSC A1100 / Af293) (Neosartorya fumigata).